We begin with the raw amino-acid sequence, 271 residues long: Eukaryotic translation initiation factor 3 subunit G (271 aa).

3 disordered regions span residues 1-26 (MSTT…TNPD), 63-119 (AQRK…AQKL), and 147-187 (TTSS…RDDS). Residue Ser77 is modified to Phosphoserine. Residues 188–267 (TTLKVSQLNS…LILHLEWSKK (80 aa)) form the RRM domain.

The protein belongs to the eIF-3 subunit G family. As to quaternary structure, component of the eukaryotic translation initiation factor 3 (eIF-3) complex.

The protein localises to the cytoplasm. RNA-binding component of the eukaryotic translation initiation factor 3 (eIF-3) complex, which is involved in protein synthesis of a specialized repertoire of mRNAs and, together with other initiation factors, stimulates binding of mRNA and methionyl-tRNAi to the 40S ribosome. The eIF-3 complex specifically targets and initiates translation of a subset of mRNAs involved in cell proliferation. This subunit can bind 18S rRNA. The polypeptide is Eukaryotic translation initiation factor 3 subunit G (Scheffersomyces stipitis (strain ATCC 58785 / CBS 6054 / NBRC 10063 / NRRL Y-11545) (Yeast)).